The following is a 158-amino-acid chain: Non-specific lipid transfer protein GPI-anchored 29 (158 aa).

The N-terminal stretch at 1 to 24 (MAYFSTATSLLLLVLSVSSPYVHG) is a signal peptide. 4 disulfides stabilise this stretch: Cys28–Cys71, Cys38–Cys55, Cys56–Cys95, and Cys69–Cys105. Asn84 carries N-linked (GlcNAc...) asparagine glycosylation. A lipid anchor (GPI-anchor amidated serine) is attached at Ser134. Positions 135-158 (KGNSLIPISGFSFVIVTALAMFRI) are cleaved as a propeptide — removed in mature form.

The protein belongs to the plant LTP family. As to expression, confined to the ovaries of the inflorescence.

Its subcellular location is the secreted. It localises to the cell membrane. In terms of biological role, probable lipid transfer protein. This Arabidopsis thaliana (Mouse-ear cress) protein is Non-specific lipid transfer protein GPI-anchored 29.